A 540-amino-acid chain; its full sequence is Exopolysaccharide phosphotransferase SCO6022 (540 aa).

Belongs to the stealth family.

In Streptomyces coelicolor (strain ATCC BAA-471 / A3(2) / M145), this protein is Exopolysaccharide phosphotransferase SCO6022.